Consider the following 542-residue polypeptide: CTP synthase (542 aa).

Residues 1–264 form an amidoligase domain region; sequence MKFIFITGGV…AKLIINKLKL (264 aa). S12 provides a ligand contact to CTP. A UTP-binding site is contributed by S12. 13–18 is an ATP binding site; it reads SLGKGI. Position 53 (Y53) interacts with L-glutamine. D70 serves as a coordination point for ATP. D70 and E138 together coordinate Mg(2+). Residues 145-147, 185-190, and K221 each bind CTP; these read DIE and KTKPTQ. UTP contacts are provided by residues 185 to 190 and K221; that span reads KTKPTQ. 237–239 is a binding site for ATP; sequence KDA. The Glutamine amidotransferase type-1 domain occupies 298–541; the sequence is YIMLKDAYTS…VKSALDKKLK (244 aa). G359 contacts L-glutamine. Catalysis depends on C386, which acts as the Nucleophile; for glutamine hydrolysis. L-glutamine contacts are provided by residues 387–390, E410, and R467; that span reads LGMQ. Active-site residues include H514 and E516.

The protein belongs to the CTP synthase family. As to quaternary structure, homotetramer.

It catalyses the reaction UTP + L-glutamine + ATP + H2O = CTP + L-glutamate + ADP + phosphate + 2 H(+). The catalysed reaction is L-glutamine + H2O = L-glutamate + NH4(+). The enzyme catalyses UTP + NH4(+) + ATP = CTP + ADP + phosphate + 2 H(+). It participates in pyrimidine metabolism; CTP biosynthesis via de novo pathway; CTP from UDP: step 2/2. Allosterically activated by GTP, when glutamine is the substrate; GTP has no effect on the reaction when ammonia is the substrate. The allosteric effector GTP functions by stabilizing the protein conformation that binds the tetrahedral intermediate(s) formed during glutamine hydrolysis. Inhibited by the product CTP, via allosteric rather than competitive inhibition. Its function is as follows. Catalyzes the ATP-dependent amination of UTP to CTP with either L-glutamine or ammonia as the source of nitrogen. Regulates intracellular CTP levels through interactions with the four ribonucleotide triphosphates. The polypeptide is CTP synthase (Methanococcus aeolicus (strain ATCC BAA-1280 / DSM 17508 / OCM 812 / Nankai-3)).